Consider the following 518-residue polypeptide: MAINLNEYSLLIKDQIKKYANKIISDQKGYIITIGDGIVRVSGLDDVLLNELVEFENGAYGIALNLEPNSVGVVMLSDYYDLKEGSSVKRTGKVIQAPVGDGLLGRVIDPIGLPIDGKGELKNISGYAPIERLAYGVMQRKSVHQPLETGILAIDSMLPIGKGQRELIIGDRQTGKTTIALDTIINQKGKNVNCIYVAIGQKNSSVAQITRLLEETGAMAYTTIVSATASELAALSYIAPFAGVTIGEEWMRQGKDVLIVYDDLSKHAVAYRALSLLLRRPPGREAYPGDIFYLHSRLLERAGKLSDELGAGSITALPIIETQAGDISAYIPTNVISITDGQLFTTTSLFNSGQRPAIHVGLSVSRVGSAAQLKSIKQVSGSLKLELAQYRELDTFSQFSSDLDAETKIVLEHGARVMEMFKQPQAKPIDQTSEAVLLFGIKNRFIKWIPTDHIIKFKEFILDKIKQDQVYKKIEEKKAFDDEIEKELTAFFKDVVKKYTSTLVDYNGSLYGDLKELE.

Position 170 to 177 (170 to 177 (GDRQTGKT)) interacts with ATP.

This sequence belongs to the ATPase alpha/beta chains family. F-type ATPases have 2 components, CF(1) - the catalytic core - and CF(0) - the membrane proton channel. CF(1) has five subunits: alpha(3), beta(3), gamma(1), delta(1), epsilon(1). CF(0) has three main subunits: a(1), b(2) and c(9-12). The alpha and beta chains form an alternating ring which encloses part of the gamma chain. CF(1) is attached to CF(0) by a central stalk formed by the gamma and epsilon chains, while a peripheral stalk is formed by the delta and b chains.

The protein resides in the cell membrane. It catalyses the reaction ATP + H2O + 4 H(+)(in) = ADP + phosphate + 5 H(+)(out). In terms of biological role, produces ATP from ADP in the presence of a proton gradient across the membrane. The alpha chain is a regulatory subunit. The polypeptide is ATP synthase subunit alpha (Mycoplasmoides gallisepticum (strain R(low / passage 15 / clone 2)) (Mycoplasma gallisepticum)).